Consider the following 346-residue polypeptide: 3 beta-hydroxysteroid dehydrogenase/Delta 5--&gt;4-isomerase (346 aa).

Catalysis depends on Y147, which acts as the Proton acceptor. Residue K151 coordinates NAD(+).

It belongs to the 3-beta-HSD family.

It catalyses the reaction a 3beta-hydroxy-Delta(5)-steroid + NAD(+) = a 3-oxo-Delta(5)-steroid + NADH + H(+). The catalysed reaction is a 3-oxo-Delta(5)-steroid = a 3-oxo-Delta(4)-steroid. Its pathway is lipid metabolism; steroid biosynthesis. Functionally, catalyzes the oxidative conversion of Delta(5)-ene-3-beta-hydroxy steroid, and the oxidative conversion of ketosteroids. The 3-beta-HSD enzymatic system plays a crucial role in the biosynthesis of all classes of hormonal steroids. During viral infection, steroid production contributes to virulence by inhibiting the host inflammatory response. This is 3 beta-hydroxysteroid dehydrogenase/Delta 5--&gt;4-isomerase (OPG174) from Homo sapiens (Human).